The chain runs to 146 residues: Hemoglobin subunit beta (146 aa).

Val-1 bears the N-acetylvaline mark. One can recognise a Globin domain in the interval His-2 to His-146. The residue at position 44 (Ser-44) is a Phosphoserine. Residue Lys-59 is modified to N6-acetyllysine. Position 63 (His-63) interacts with heme b. At Lys-82 the chain carries N6-acetyllysine. His-92 is a binding site for heme b. Cys-93 bears the S-nitrosocysteine mark.

This sequence belongs to the globin family. As to quaternary structure, heterotetramer of two alpha chains and two beta chains. As to expression, red blood cells.

Involved in oxygen transport from the lung to the various peripheral tissues. The protein is Hemoglobin subunit beta (HBB) of Hippopotamus amphibius (Hippopotamus).